The chain runs to 136 residues: Phosphoribosyl-AMP cyclohydrolase (136 aa).

Asp-92 contacts Mg(2+). Zn(2+) is bound at residue Cys-93. Residues Asp-94 and Asp-96 each contribute to the Mg(2+) site. Zn(2+) contacts are provided by Cys-109 and Cys-116.

The protein belongs to the PRA-CH family. As to quaternary structure, homodimer. Mg(2+) serves as cofactor. Zn(2+) is required as a cofactor.

Its subcellular location is the cytoplasm. The catalysed reaction is 1-(5-phospho-beta-D-ribosyl)-5'-AMP + H2O = 1-(5-phospho-beta-D-ribosyl)-5-[(5-phospho-beta-D-ribosylamino)methylideneamino]imidazole-4-carboxamide. The protein operates within amino-acid biosynthesis; L-histidine biosynthesis; L-histidine from 5-phospho-alpha-D-ribose 1-diphosphate: step 3/9. With respect to regulation, reversibly inhibited by EDTA and free zinc ions. Enzyme is inactivated by dialysis against 1,10-phenanthroline, which is a zinc specific chelator. Functionally, catalyzes the hydrolysis of the adenine ring of phosphoribosyl-AMP. The sequence is that of Phosphoribosyl-AMP cyclohydrolase from Methanococcus vannielii.